The primary structure comprises 480 residues: tRNA (guanine(37)-N(1))-methyltransferase (480 aa).

Residues His244, 292–293 (DL), 321–322 (DG), and Asn342 each bind S-adenosyl-L-methionine.

The protein belongs to the class I-like SAM-binding methyltransferase superfamily. TRM5/TYW2 family. Monomer.

It localises to the mitochondrion matrix. The protein resides in the nucleus. Its subcellular location is the cytoplasm. It carries out the reaction guanosine(37) in tRNA + S-adenosyl-L-methionine = N(1)-methylguanosine(37) in tRNA + S-adenosyl-L-homocysteine + H(+). Specifically methylates the N1 position of guanosine-37 in various cytoplasmic and mitochondrial tRNAs. Methylation is not dependent on the nature of the nucleoside 5' of the target nucleoside. This is the first step in the biosynthesis of wybutosine (yW), a modified base adjacent to the anticodon of tRNAs and required for accurate decoding. The sequence is that of tRNA (guanine(37)-N(1))-methyltransferase from Thalassiosira pseudonana (Marine diatom).